A 541-amino-acid polypeptide reads, in one-letter code: DEAD-box ATP-dependent RNA helicase 57 (541 aa).

Over residues 43-52 (VEEEEDTEQP) the composition is skewed to acidic residues. The tract at residues 43-72 (VEEEEDTEQPEAEKVIVSSKKRKRRSSNSV) is disordered. A Q motif motif is present at residues 141-169 (ELSSRYGCEGYILRNLAELGFKEPTPIQR). Positions 172–342 (IPILLSGREC…RSIMHDAVRV (171 aa)) constitute a Helicase ATP-binding domain. An ATP-binding site is contributed by 185–192 (APTGSGKT). Positions 289 to 292 (DESD) match the DEAD box motif. The Helicase C-terminal domain occupies 370–514 (ALRQSFAESL…EVPSWIMSLK (145 aa)). Residues 517-541 (KWRKHRPRRDSISTKPKADKNDTDE) are disordered. The segment covering 525 to 541 (RDSISTKPKADKNDTDE) has biased composition (basic and acidic residues).

Belongs to the DEAD box helicase family. DDX52/ROK1 subfamily.

The enzyme catalyses ATP + H2O = ADP + phosphate + H(+). This is DEAD-box ATP-dependent RNA helicase 57 (RH57) from Arabidopsis thaliana (Mouse-ear cress).